Here is a 44-residue protein sequence, read N- to C-terminus: MTTKKSAEVLVYPIFTVRWLAIHGIAVPTIFFLGAITAMQFIQR.

A helical membrane pass occupies residues W19–A35. Position 23 (H23) interacts with heme.

This sequence belongs to the PsbE/PsbF family. In terms of assembly, heterodimer of an alpha subunit and a beta subunit. PSII is composed of 1 copy each of membrane proteins PsbA, PsbB, PsbC, PsbD, PsbE, PsbF, PsbH, PsbI, PsbJ, PsbK, PsbL, PsbM, PsbT, PsbX, PsbY, PsbZ, Psb30/Ycf12, at least 3 peripheral proteins of the oxygen-evolving complex and a large number of cofactors. It forms dimeric complexes. Heme b serves as cofactor.

The protein resides in the plastid. It localises to the chloroplast thylakoid membrane. In terms of biological role, this b-type cytochrome is tightly associated with the reaction center of photosystem II (PSII). PSII is a light-driven water:plastoquinone oxidoreductase that uses light energy to abstract electrons from H(2)O, generating O(2) and a proton gradient subsequently used for ATP formation. It consists of a core antenna complex that captures photons, and an electron transfer chain that converts photonic excitation into a charge separation. This chain is Cytochrome b559 subunit beta, found in Chlamydomonas reinhardtii (Chlamydomonas smithii).